The chain runs to 666 residues: Hybrid PKS-NRPS synthetase pytA (666 aa).

A Ketosynthase family 3 (KS3) domain is found at 1 to 340 (MDPQQRLLLE…GTNAHAILEE (340 aa)). Residues Cys-87, His-222, and His-260 each act as for beta-ketoacyl synthase activity in the active site. Positions 455 to 665 (VFTGQGAQWF…VFVHSLVIKR (211 aa)) are malonyl-CoA:ACP transacylase (MAT) domain. Ser-548 acts as the For malonyltransferase activity in catalysis.

The protein in the C-terminal section; belongs to the NRP synthetase family.

The protein operates within secondary metabolite biosynthesis. Functionally, hybrid PKS-NRPS synthetase; part of the gene cluster that mediates the biosynthesis of pyranterreones, a family of antioxidative compounds. The first step of pyranonigrins biosynthesis is performed by the hybrid PKS-NRPS synthetase pytA that condenses 4 malonyl-CoA units ato the acetyl starter unit by the modular PKS of pytA. The acyl chain is then connected to an L-serine through the amide bond by the modular NRPS of pytA. A tetramic acid is formed and released from the PKS-NRPS pytA to give pyranterreone 5 with the help of the thioesterase pytI. Pyranterreone 5 could be methylated by pytC to afford pyranterreone 6. Both pyranterreones 5 and 6 are subsequently oxidized by the FAD-linked oxidoreductase pytB and the cytochrome P450 monooxygenase pytD to form the fused gamma-pyrone core, resulting in pyranterreones 7 and 11, respectively. The hydroxy group at C-8 of pyranterreones 7 and 11 are dehydrated by the aspartyl protease pytH to form a delta-7 double bond to give pyranterreones 3 and 1, 2 accordingly. The exo-methylene of pyranterreone 3 could be reduced into a pendant methyl by reductase pytE to provide pyranterreone 4, also known as cordylactam. Pyranterreone 4 can be reconverted to pyranterreone 3 through pytB-catalyzed dehydrogenation or further oxidized to pyranterreones 9 and 10. In Aspergillus terreus (strain NIH 2624 / FGSC A1156), this protein is Hybrid PKS-NRPS synthetase pytA.